The sequence spans 551 residues: MKDIEIAQQVTPEPITAIAAKAGLTVDQIDQYGSTKAKLKLPLPVKKTQRNLILVTSINPTPAGEGKSTVTIGLGDALTKIGKSTMIALREPSLGPVMGMKGGATGGGYSQVIPMEDINLHFTGDMHALTAANNTLAALIDNHIQQGNQLGIDQRRIQWKRALDINDRALRHTVIGLGGATSGVPREDGFDITVASELMAILCLSENIADLKQRVNRIVIGYTHDRQPVTVADLNVGGAITLLLKDALRPNLVQTLAHTPALVHGGPFANIAHGCNSVLATQAGLNLADYTVTEAGFGADLGGQKFMDINVPAVGQAPNAVVIVATIRALKLHGGVALQDLATENVAALKAGAANLGHHIHAMQRYGVPVVVAINEFTADTDAEIHAVKDYCADLGVDAVLADVWGRGGDGATDLAAAVVDLCAQPSHFQPLSPADADLKTKINDIVTKTYGGANVEYSAKAQRQLRTFAKQGWDHLPVCMAKTQYSLSDDPKRLGAPTGFTINVREFVPKLGAGFIVALTGNVLTMPGLPKHPAALDMDISDDGKISGLF.

Residue 61-68 coordinates ATP; it reads TPAGEGKS.

Belongs to the formate--tetrahydrofolate ligase family.

The enzyme catalyses (6S)-5,6,7,8-tetrahydrofolate + formate + ATP = (6R)-10-formyltetrahydrofolate + ADP + phosphate. Its pathway is one-carbon metabolism; tetrahydrofolate interconversion. The chain is Formate--tetrahydrofolate ligase from Lactiplantibacillus plantarum (strain ATCC BAA-793 / NCIMB 8826 / WCFS1) (Lactobacillus plantarum).